A 149-amino-acid chain; its full sequence is uncharacterized protein (149 aa).

Residues 1-11 (MTKESKPDRLR) are compositionally biased toward basic and acidic residues. The interval 1-20 (MTKESKPDRLRQMGALNPKP) is disordered.

This is an uncharacterized protein from Sinorhizobium fredii (strain NBRC 101917 / NGR234).